The chain runs to 640 residues: Isoniazid-induced protein IniA (640 aa).

A helical transmembrane segment spans residues 497-519; it reads IGMLSSVVGLGLFNPLSVGAGLI. Positions 560–628 form a coiled coil; the sequence is RDRLKMIQRL…QVNDNLAGLE (69 aa).

As to quaternary structure, forms multimeric structures containing a central pore.

The protein resides in the cell membrane. Participates in the development of tolerance to both isoniazid and ethambutol. May function through a MDR-pump like mechanism, although it does not appear to directly transport isoniazid from the cell. In Mycobacterium tuberculosis (strain CDC 1551 / Oshkosh), this protein is Isoniazid-induced protein IniA (iniA).